We begin with the raw amino-acid sequence, 754 residues long: 5-methyltetrahydropteroyltriglutamate--homocysteine methyltransferase (754 aa).

5-methyltetrahydropteroyltri-L-glutamate-binding positions include 17 to 20 (RELK) and Lys-117. L-homocysteine contacts are provided by residues 431 to 433 (IGS) and Glu-484. Residues 431–433 (IGS) and Glu-484 contribute to the L-methionine site. 5-methyltetrahydropteroyltri-L-glutamate-binding positions include 515 to 516 (RC) and Trp-561. L-homocysteine is bound at residue Asp-599. Residue Asp-599 coordinates L-methionine. A 5-methyltetrahydropteroyltri-L-glutamate-binding site is contributed by Glu-605. Positions 641, 643, and 665 each coordinate Zn(2+). The Proton donor role is filled by His-694. Residue Cys-726 coordinates Zn(2+).

Belongs to the vitamin-B12 independent methionine synthase family. It depends on Zn(2+) as a cofactor.

It catalyses the reaction 5-methyltetrahydropteroyltri-L-glutamate + L-homocysteine = tetrahydropteroyltri-L-glutamate + L-methionine. It participates in amino-acid biosynthesis; L-methionine biosynthesis via de novo pathway; L-methionine from L-homocysteine (MetE route): step 1/1. Catalyzes the transfer of a methyl group from 5-methyltetrahydrofolate to homocysteine resulting in methionine formation. The protein is 5-methyltetrahydropteroyltriglutamate--homocysteine methyltransferase of Salmonella typhimurium (strain LT2 / SGSC1412 / ATCC 700720).